The following is a 180-amino-acid chain: Protein GrpE (180 aa).

It belongs to the GrpE family. Homodimer.

The protein resides in the cytoplasm. In terms of biological role, participates actively in the response to hyperosmotic and heat shock by preventing the aggregation of stress-denatured proteins, in association with DnaK and GrpE. It is the nucleotide exchange factor for DnaK and may function as a thermosensor. Unfolded proteins bind initially to DnaJ; upon interaction with the DnaJ-bound protein, DnaK hydrolyzes its bound ATP, resulting in the formation of a stable complex. GrpE releases ADP from DnaK; ATP binding to DnaK triggers the release of the substrate protein, thus completing the reaction cycle. Several rounds of ATP-dependent interactions between DnaJ, DnaK and GrpE are required for fully efficient folding. This is Protein GrpE from Picrophilus torridus (strain ATCC 700027 / DSM 9790 / JCM 10055 / NBRC 100828 / KAW 2/3).